A 60-amino-acid polypeptide reads, in one-letter code: LKCNKLVPLAYKTCPAGKNLCYKMYMVANKKVPVKRGCIDVCPKKSLLVKYECCNTDRCN.

Cystine bridges form between Cys-3–Cys-21, Cys-14–Cys-38, Cys-42–Cys-53, and Cys-54–Cys-59.

Belongs to the three-finger toxin family. Short-chain subfamily. Type IA cytotoxin sub-subfamily. Monomer in solution; Homodimer and oligomer (homohexamer) in the presence of negatively charged lipids forming a pore with a size ranging between 20 and 30 Angstroms. As to expression, expressed by the venom gland.

The protein localises to the secreted. It is found in the target cell membrane. Functionally, shows cytolytic activity on many different cells by forming pore in lipid membranes. In vivo, increases heart rate or kill the animal by cardiac arrest. In addition, it binds to heparin with high affinity, interacts with Kv channel-interacting protein 1 (KCNIP1) in a calcium-independent manner, and binds to integrin alpha-V/beta-3 (ITGAV/ITGB3) with moderate affinity. The protein is Cytotoxin sagitoxin of Naja sagittifera (Andaman cobra).